The chain runs to 494 residues: UDP-N-acetylmuramoyl-L-alanyl-D-glutamate--L-lysine ligase (494 aa).

Ser30 serves as a coordination point for UDP-N-acetyl-alpha-D-muramoyl-L-alanyl-D-glutamate. 110–116 (GTNGKTS) is an ATP binding site. UDP-N-acetyl-alpha-D-muramoyl-L-alanyl-D-glutamate-binding positions include 152 to 153 (TT), Ser179, and Arg187. Residue Lys219 is modified to N6-carboxylysine. An L-lysine recognition motif motif is present at residues 406-409 (DNPA).

It belongs to the MurCDEF family. MurE subfamily. In terms of processing, carboxylation is probably crucial for Mg(2+) binding and, consequently, for the gamma-phosphate positioning of ATP.

The protein resides in the cytoplasm. The catalysed reaction is UDP-N-acetyl-alpha-D-muramoyl-L-alanyl-D-glutamate + L-lysine + ATP = UDP-N-acetyl-alpha-D-muramoyl-L-alanyl-gamma-D-glutamyl-L-lysine + ADP + phosphate + H(+). It participates in cell wall biogenesis; peptidoglycan biosynthesis. Its function is as follows. Catalyzes the addition of L-lysine to the nucleotide precursor UDP-N-acetylmuramoyl-L-alanyl-D-glutamate (UMAG) in the biosynthesis of bacterial cell-wall peptidoglycan. This is UDP-N-acetylmuramoyl-L-alanyl-D-glutamate--L-lysine ligase from Staphylococcus aureus (strain bovine RF122 / ET3-1).